The sequence spans 511 residues: Exodeoxyribonuclease 7 large subunit (511 aa).

Belongs to the XseA family. Heterooligomer composed of large and small subunits.

It is found in the cytoplasm. It carries out the reaction Exonucleolytic cleavage in either 5'- to 3'- or 3'- to 5'-direction to yield nucleoside 5'-phosphates.. In terms of biological role, bidirectionally degrades single-stranded DNA into large acid-insoluble oligonucleotides, which are then degraded further into small acid-soluble oligonucleotides. The sequence is that of Exodeoxyribonuclease 7 large subunit from Brucella suis (strain ATCC 23445 / NCTC 10510).